Here is a 214-residue protein sequence, read N- to C-terminus: Phosphatidylserine decarboxylase proenzyme (214 aa).

Residue S183 is the Schiff-base intermediate with substrate; via pyruvic acid of the active site. A Pyruvic acid (Ser); by autocatalysis modification is found at S183.

It belongs to the phosphatidylserine decarboxylase family. PSD-A subfamily. As to quaternary structure, heterodimer of a large membrane-associated beta subunit and a small pyruvoyl-containing alpha subunit. Requires pyruvate as cofactor. In terms of processing, is synthesized initially as an inactive proenzyme. Formation of the active enzyme involves a self-maturation process in which the active site pyruvoyl group is generated from an internal serine residue via an autocatalytic post-translational modification. Two non-identical subunits are generated from the proenzyme in this reaction, and the pyruvate is formed at the N-terminus of the alpha chain, which is derived from the carboxyl end of the proenzyme. The post-translation cleavage follows an unusual pathway, termed non-hydrolytic serinolysis, in which the side chain hydroxyl group of the serine supplies its oxygen atom to form the C-terminus of the beta chain, while the remainder of the serine residue undergoes an oxidative deamination to produce ammonia and the pyruvoyl prosthetic group on the alpha chain.

Its subcellular location is the cell membrane. It catalyses the reaction a 1,2-diacyl-sn-glycero-3-phospho-L-serine + H(+) = a 1,2-diacyl-sn-glycero-3-phosphoethanolamine + CO2. It participates in phospholipid metabolism; phosphatidylethanolamine biosynthesis; phosphatidylethanolamine from CDP-diacylglycerol: step 2/2. Its function is as follows. Catalyzes the formation of phosphatidylethanolamine (PtdEtn) from phosphatidylserine (PtdSer). The protein is Phosphatidylserine decarboxylase proenzyme of Syntrophotalea carbinolica (strain DSM 2380 / NBRC 103641 / GraBd1) (Pelobacter carbinolicus).